Consider the following 223-residue polypeptide: Uracil-DNA glycosylase (223 aa).

The active-site Proton acceptor is the aspartate 67.

This sequence belongs to the uracil-DNA glycosylase (UDG) superfamily. UNG family.

The protein resides in the cytoplasm. The catalysed reaction is Hydrolyzes single-stranded DNA or mismatched double-stranded DNA and polynucleotides, releasing free uracil.. Its function is as follows. Excises uracil residues from the DNA which can arise as a result of misincorporation of dUMP residues by DNA polymerase or due to deamination of cytosine. In Borreliella burgdorferi (strain ZS7) (Borrelia burgdorferi), this protein is Uracil-DNA glycosylase.